The following is a 141-amino-acid chain: Hemoglobin subunit alpha-1 (141 aa).

A Globin domain is found at 1–141 (VLSAADKGNV…VSTVLTSKYR (141 aa)). His58 lines the O2 pocket. His87 provides a ligand contact to heme b.

Belongs to the globin family. Heterotetramer of two alpha chains and two beta chains. In terms of tissue distribution, red blood cells.

Its function is as follows. Involved in oxygen transport from the lung to the various peripheral tissues. The chain is Hemoglobin subunit alpha-1 from Bos mutus grunniens (Wild yak).